Consider the following 2280-residue polypeptide: MVYNNGSLRGRKKIEEKYIPMNRKSTSLKDPSRTKNNNYIKTLDTYINEEDSPTKILSKGKKNKNENIKKRINEKDNDTDREDAASLNVDYNKNVMKKYNTRGTFIEKVSSSERNIEHNNNIIRKLGSKDYSKARVQTMTTNIGNHNALKKINPKVPSITSRTKSYTKVMNENKYNNNNSNNSNNNNINSMYYSKKLNNKKYSTEHTQSIDNNNITSKRLNNKKTATDKAQSTSRYCISNSVKKSYSTKGYNTDRSQTMSRYTLQNKKDSNTNTNRKGYSTHRGQIIQDNSNINNQAEKKKRNMSLKKKYIKESSNSTITGSNEKKNSNNILKKNSTCDLNYLNKEYNNNNNMHEHAENVYNINDNEGCSSMQIINDEDVQKNVPEFYTINLGSETKNMGENYIFKNRDKKIKPNIYNERNNMDLMEHKLNDDMSYNFADHIKDIECYINQLNESNKCNIYKECDPSKLISPVYDNVNDNILENNQQLNEYEKHNDILTTSYLKYYSHTNNNNHYYNDEDVHLDLGKTNEGFSNVVKNMDNIPWNETNKKESFSNIKKKIDHTDDRHIAYVDNSSMKHTMNDKDQYVKNVPYNNTMEEVLLLNEKRGNILGSLISKNHDAKRATSNNNNINNNKYYYYDNKYSEHGGDSVSSNIGYPHGYKNNNIYNYVNNIKDLSSPLYCNTKTKRAHKFHTDNIMSDQLNKYEDNNKNDGKFFSGNISSKQKGKNNLTNYTTHSSEYRIKSIESNLTKDYRKSLTYNDIPNFLDYNINNTNVQNSDFGDSHYINRNVSYKNSMNSNDDIQNSNNNNNNNNNNNMVNNPNEYLVYTNEKHYVRINNKLYEKTRDNTYIEVDSNSNFDIINDINSSHNSPLDNIKDNTLYHNTNKKEYSDYVSSYSNINKYEDINLPNNIHVSKDGKYLFKNYSVSQNVSDDNSVQDSFFSRTERSNSQNRYDKNGVNHIEQNYYNNSNRRDDIYYYHNQLKKLERLTQQNIKSGKYQRNIPQNDDNDHNDDDSEIKEVKKDKTKIDMNKHLHLNDKKIFNQVKRENTGVHMNASKTIKNMKEVTYRNINNDTNYNNNNVKINYLYSDELGKNKNRDTPLKTKQHGDSLDNKTELKKKIYNDIINNDIINNNIINNDIIKSGAINNNIVNNNLINNYNADNRNVSNSIFTQHINNINNNFYNSDDERINIIDNNKRMDMTKDESDRFRNNYFVELEKRKKNLGKTNNTTPISLSKNETINNMMINKRNFFNNYISDKVRDKILKREISCSVNTVCSSKTNNKTNSNYSSNNNNDNNNNNNNSNPFILDNSIRKSNIIITTSNNAKLINNTIISKGINNNILNINSNKNKSLNSAKINALGLLSSRNDLNYIMNNNRTSNNHINQHLLYNNRNYSVIKIPNVHKEKRSSKIPHNINIKSNLNLEPNIKTYTNIKTPINIKAYTNIKAPTNIKAPINIKASTNIKAPTNVKAPTNVKAPTNVKAPTNVNAPTNVNAPTNANAPTYVNTPTNIKRQEFSNVTLNYKGISKFDINEDKNTTIIPPLHRQSNSNFPFKNTKLNLNSDMYTEKELIKCKSINNSDIYNYLRNTYNKTPSKFYRTVSYRNMSLKKNKSMLENRKRKTEKKEENLMSTFNYTSEVDSKYIVKKAVVVGCNYVSEERSRLYGSVNDAYVFCRALVKYFDFLPENILLLTDSLPSNAYIYEDFDINRKKYINVDEEENIKNNEPLKKKNIFNLFNTNALYTTLKKTNEEELNCNSCKDVEIKNVDISSEKMNFNLWPTRVNILKAVNWLVRDSIPFGSYVFYFAGKSVQVDNMSGWEGEGYDEAFLCSDPFNKISEHNVITAVQLKDLLLSINESAQMTIILDCSGGQTILDPAGTENSLSYIKGCKQKGIWPITNPTNKVHKAIYDITILNNTSMKKYFCRSRYSKLIEVESTSAMIDPLLQSISSLPVAPKAYCLCAATWEQISIEGLFPIIEFARVSQLKKPESYKTGEGHYQNMNKKNIRAEKSNRNGPNGLINKNNNLSKKTNYEKNFNFTLNMMKMLFSNTNNNENKLDEKEKINRLGFNENDSDYIDDNYNSDDNNNNNYYYNYDGEKGFKNFQENLNNVGQKDVIKNKKFKDNYILVSHGVFTYCLIEAIIEFKEKELKYNILEKKNEQFIPMTLKNLINVIQQKMQNIKYNKLKKINQKPEFTIHPGANATNNNYFVHYSKNIHFQNYKCNFINADLSPFLNVNKAWEEINRTTLRNRKSLSLSSTLINTASSKYFTQKNEQFKNSYSLKY.

Disordered regions lie at residues Ile-56–Asp-83, Tyr-202–Gly-284, Tyr-791–Asn-819, Asp-931–Lys-954, Ser-994–Glu-1015, Lys-1278–Ile-1306, and Lys-1469–Ala-1500. Basic and acidic residues predominate over residues Asn-63–Asp-83. Polar residues-rich tracts occupy residues Glu-205 to Arg-219 and Asp-228 to Gly-278. Low complexity-rich tracts occupy residues Asn-793 to Asn-819 and Asp-931 to Ser-941. 2 stretches are compositionally biased toward low complexity: residues Lys-1278 to Asn-1303 and Ala-1482 to Ala-1500.

It belongs to the peptidase C14B family.

Protease that cleaves specifically after arginine or lysine residues. The protein is Metacaspase-3 of Plasmodium falciparum (isolate 3D7).